The following is a 433-amino-acid chain: MTETLLKKKLNLNDQFLLNLKNYQEIFWKNPNYGDELPDLDVNRETIFQANRRLERFAPYLESVFSDTKRSKGIIESPIQRMDSIKDLLSVKGSLLIKRDDLMPVSGSIKSRGGIYEVLCFAEKIAIENGFDLKKDNYQDLRKDKYRKLFNQWRIEVASTGNLGLSVGLMASTLGFKARIHMSHDATDWKINKLLQNGVEVKIYDDNFSNAVAAARVSSQRDPYSYFIDDEGSKLLFAGYATAGERVKKQLSKMQIEVSKEHPLVVYLPAGVGGSPSGVAFGLKLQFADAVIPIFVEPTHMPSVLLGMASGLNHDISVYDIGIDGKTAADGLAVGRPSMIAGKYMKDKLFGIATVSDSDMFAYQGMLKKLENIEVEPSAAVGIRGLIQSKEISEIPDSATHMVWATGGSMVPKNTMHKYEDKAVRIFNTWKSE.

The residue at position 110 (K110) is an N6-(pyridoxal phosphate)lysine.

It belongs to the serine/threonine dehydratase family. DsdA subfamily. The cofactor is pyridoxal 5'-phosphate.

The catalysed reaction is D-serine = pyruvate + NH4(+). The chain is Probable D-serine dehydratase from Oenococcus oeni (strain ATCC BAA-331 / PSU-1).